Reading from the N-terminus, the 62-residue chain is Phospholipase A2 superbin a (62 aa).

Residues Tyr-28, Gly-30, and Gly-32 each coordinate Ca(2+). The cysteines at positions 29 and 45 are disulfide-linked. The active site involves His-48. Ca(2+) is bound at residue Asp-49.

It depends on Ca(2+) as a cofactor. As to expression, expressed by the venom gland.

The protein localises to the secreted. It carries out the reaction a 1,2-diacyl-sn-glycero-3-phosphocholine + H2O = a 1-acyl-sn-glycero-3-phosphocholine + a fatty acid + H(+). Snake venom phospholipase A2 (PLA2) that inhibits collagen-induced platelet aggregation. In terms of inhibition of platelet aggregation, superbin a is more potent as superbin b, c, and d. PLA2 catalyzes the calcium-dependent hydrolysis of the 2-acyl groups in 3-sn-phosphoglycerides. The sequence is that of Phospholipase A2 superbin a from Austrelaps superbus (Lowland copperhead snake).